A 220-amino-acid polypeptide reads, in one-letter code: Probable GTP-binding protein EngB (220 aa).

Residues 26–200 form the EngB-type G domain; sequence EGIEIAFAGR…RAKLDEWYAP (175 aa). Residues 34 to 41, 61 to 65, 79 to 82, 146 to 149, and 179 to 181 each bind GTP; these read GRSNAGKS, GRTQL, DLPG, TKAD, and FSS. Mg(2+) contacts are provided by Ser41 and Thr63.

Belongs to the TRAFAC class TrmE-Era-EngA-EngB-Septin-like GTPase superfamily. EngB GTPase family. Mg(2+) is required as a cofactor.

In terms of biological role, necessary for normal cell division and for the maintenance of normal septation. In Vibrio cholerae serotype O1 (strain ATCC 39315 / El Tor Inaba N16961), this protein is Probable GTP-binding protein EngB.